Reading from the N-terminus, the 682-residue chain is Acetyl-coenzyme A synthetase 2-like, mitochondrial (682 aa).

A mitochondrion-targeting transit peptide spans methionine 1–leucine 38. CoA-binding positions include arginine 217 to arginine 220 and threonine 334. An N6-acetyllysine modification is found at lysine 389. Residues glycine 410–proline 412, aspartate 434–threonine 439, aspartate 526, and arginine 541 each bind ATP. A CoA-binding site is contributed by serine 549. Residue arginine 552 participates in ATP binding. Lysine 635 is subject to N6-acetyllysine.

Belongs to the ATP-dependent AMP-binding enzyme family. In terms of assembly, interacts with SIRT3. In terms of processing, reversibly acetylated at Lys-635. The acetyl-CoA synthase activity is inhibited by acetylation and activated by deacetylation mediated by the deacetylase SIRT3. Highly expressed in heart, testis, kidney, skeletal muscle, lung and spleen. Detected at low levels in brain.

It localises to the mitochondrion matrix. The enzyme catalyses acetate + ATP + CoA = acetyl-CoA + AMP + diphosphate. The catalysed reaction is propanoate + ATP + CoA = propanoyl-CoA + AMP + diphosphate. With respect to regulation, inhibited by acetylation at Lys-635 and activated by deacetylation mediated by the deacetylase SIRT3. Catalyzes the synthesis of acetyl-CoA from short-chain fatty acids. Acetate is the preferred substrate. Can also utilize propionate with a much lower affinity. Provides acetyl-CoA that is utilized mainly for oxidation under ketogenic conditions. Involved in thermogenesis under ketogenic conditions, using acetate as a vital fuel when carbohydrate availability is insufficient. The sequence is that of Acetyl-coenzyme A synthetase 2-like, mitochondrial (Acss1) from Mus musculus (Mouse).